The primary structure comprises 1171 residues: WD repeat-containing protein on Y chromosome (1171 aa).

8 WD repeats span residues 157-201 (EIPE…LRSA), 331-370 (RIPL…EPSA), 374-413 (GHNG…LLQT), 464-503 (THAA…RKII), 516-555 (IIDI…VVRN), 603-643 (FHTD…RRYN), 748-787 (KVGD…IPQA), and 831-870 (GHLK…LGTL). The disordered stretch occupies residues 1076 to 1171 (RTSFTLSDYT…TNTMKSSNSH (96 aa)). Polar residues-rich tracts occupy residues 1094–1106 (SSRN…SSGS) and 1161–1171 (KTNTMKSSNSH).

The protein is WD repeat-containing protein on Y chromosome of Drosophila grimshawi (Hawaiian fruit fly).